The sequence spans 472 residues: Ribosomal RNA small subunit methyltransferase F (472 aa).

Residues 123 to 129 (AAAPGSK), E147, D174, and D192 contribute to the S-adenosyl-L-methionine site. C245 serves as the catalytic Nucleophile.

It belongs to the class I-like SAM-binding methyltransferase superfamily. RsmB/NOP family.

It localises to the cytoplasm. The catalysed reaction is cytidine(1407) in 16S rRNA + S-adenosyl-L-methionine = 5-methylcytidine(1407) in 16S rRNA + S-adenosyl-L-homocysteine + H(+). Specifically methylates the cytosine at position 1407 (m5C1407) of 16S rRNA. In Vibrio vulnificus (strain CMCP6), this protein is Ribosomal RNA small subunit methyltransferase F.